The following is a 533-amino-acid chain: Methyl-accepting chemotaxis protein IV (533 aa).

The Cytoplasmic portion of the chain corresponds to 1–6 (MFNRIR). A helical membrane pass occupies residues 7–33 (ISTTLFLILILCGILQIGSNGMSFWAF). Over 34–188 (RDDLQRLNQV…AQSQRNYQIS (155 aa)) the chain is Periplasmic. Residues 189–209 (ALVFISMIIVAAIYISSALWW) form a helical membrane-spanning segment. Residues 210-533 (TRKMIVQPLA…VQLQIAPVVS (324 aa)) lie on the Cytoplasmic side of the membrane. In terms of domain architecture, HAMP spans 212–264 (KMIVQPLAIIGSHFDSIAAGNLARPIAVYGRNEITAIFASLKTMQQALRGTVS). The Methyl-accepting transducer domain occupies 269–498 (GSQEMHIGIA…EAAVATEQLA (230 aa)). Gln293, Gln300, and Gln307 each carry glutamate methyl ester (Gln). Glu489 carries the post-translational modification Glutamate methyl ester (Glu).

The protein belongs to the methyl-accepting chemotaxis (MCP) protein family.

It localises to the cell inner membrane. In terms of biological role, mediates taxis toward dipeptides via an interaction with the periplasmic dipeptide-binding protein. Its function is as follows. Chemotactic-signal transducers respond to changes in the concentration of attractants and repellents in the environment, transduce a signal from the outside to the inside of the cell, and facilitate sensory adaptation through the variation of the level of methylation. Attractants increase the level of methylation while repellents decrease the level of methylation, the methyl groups are added by the methyltransferase CheR and removed by the methylesterase CheB. This is Methyl-accepting chemotaxis protein IV (tap) from Escherichia coli (strain K12).